A 723-amino-acid polypeptide reads, in one-letter code: BTB/POZ domain-containing protein 18 (723 aa).

The 69-residue stretch at cysteine 34 to glutamine 102 folds into the BTB domain. 3 disordered regions span residues alanine 150–leucine 176, glutamate 188–glutamine 350, and glutamate 370–threonine 394. 2 stretches are compositionally biased toward polar residues: residues arginine 162–serine 174 and asparagine 195–threonine 205. 2 stretches are compositionally biased toward low complexity: residues glutamine 217–arginine 227 and threonine 271–threonine 286. Composition is skewed to basic and acidic residues over residues glutamine 303 to glutamate 312 and lysine 327 to proline 336. Serine 414 is modified (phosphoserine). The disordered stretch occupies residues threonine 603–leucine 637. The span at glutamine 617 to serine 626 shows a compositional bias: basic and acidic residues. Residues serine 627 to histidine 636 show a composition bias toward polar residues. Phosphoserine is present on residues serine 682 and serine 683. Residues leucine 699–threonine 723 are disordered. Over residues serine 713–threonine 723 the composition is skewed to acidic residues.

Expressed in testis.

It is found in the nucleus. Specifically required during spermatogenesis to promote expression of piRNA precursors. The piRNA metabolic process mediates the repression of transposable elements during meiosis by forming complexes composed of piRNAs and Piwi proteins and governs the methylation and subsequent repression of transposons, which is essential for the germline integrity. Acts by facilitating transcription elongation at piRNA loci during pachytene. This is BTB/POZ domain-containing protein 18 from Mus musculus (Mouse).